We begin with the raw amino-acid sequence, 622 residues long: Threonine--tRNA ligase (622 aa).

Residues 1–141 (MKTLLIHSDY…SRKITTERKE (141 aa)) form an editing domain region. Positions 199–498 (PHVKYIKEKE…TLENRPPALP (300 aa)) are catalytic. Residues C291, H343, and H467 each contribute to the Zn(2+) site.

Belongs to the class-II aminoacyl-tRNA synthetase family. Homodimer. Zn(2+) is required as a cofactor.

The protein localises to the cytoplasm. The enzyme catalyses tRNA(Thr) + L-threonine + ATP = L-threonyl-tRNA(Thr) + AMP + diphosphate + H(+). Functionally, catalyzes the attachment of threonine to tRNA(Thr) in a two-step reaction: L-threonine is first activated by ATP to form Thr-AMP and then transferred to the acceptor end of tRNA(Thr). Also edits incorrectly charged L-seryl-tRNA(Thr). This Methanococcus maripaludis (strain C6 / ATCC BAA-1332) protein is Threonine--tRNA ligase.